A 132-amino-acid chain; its full sequence is NAD(P) transhydrogenase subunit alpha part 2 (132 aa).

A run of 3 helical transmembrane segments spans residues 43–63, 72–92, and 103–123; these read PLVF…YVVW, PLMS…MIAI, and LLGS…FIVT.

In terms of assembly, complex of an alpha and a beta chain; in Rickettsia, the alpha chain seems to be made of two subunits.

Its subcellular location is the cell inner membrane. It catalyses the reaction NAD(+) + NADPH + H(+)(in) = NADH + NADP(+) + H(+)(out). Functionally, the transhydrogenation between NADH and NADP is coupled to respiration and ATP hydrolysis and functions as a proton pump across the membrane. The chain is NAD(P) transhydrogenase subunit alpha part 2 (pntAB) from Rickettsia prowazekii (strain Madrid E).